The primary structure comprises 485 residues: MPITFKKIDKEDFLEIRKNFLENYKNLDDFDLNTAIRFHKSLPDHKNFQKKIEQSVQDNKIMTQAHSKETLLEDLIKNLNTFYRVGQADFLSIIIDSHTRENHYDNAKVILEDSIKSNKSLLNGFPLINYGTKLARKIINDVEVPLQIKHGSPDARLLVEVALLSGFSAFDGGGISHNIPFSKSISLKDSLENWKYVDRLVGIYEENGIKINREIFSPLTATLVPPAISNSIQILETLLAVEQGVKNISIGVAQYGNITQDIASLLALKEHIQFYLDTFSFKDINISTVFNQWIGGFPEEELKAYSLISYSTTIALFSKTNRIFVKNIDEYAKNSLGNTMINSLLLTKTILDIGNNQKINNYEEIIFEKEQIKKETAQIIAKIFSRCDGDLRKAIIEAFEYGVLDVPFAPSKYNLGKMMPARDSEGMIRYLDIGNLPFCPLIEEFHNKKIKERSMKENREINFQMTIDDIFAMSQGKLINKKSRE.

R100 lines the L-glutamate pocket. N123 contributes to the adenosylcob(III)alamin binding site. L-glutamate is bound by residues 149 to 150 (KH) and D171. The adenosylcob(III)alamin site is built by P180, F297, K326, and E330.

Belongs to the methylaspartate mutase GlmE subunit family. As to quaternary structure, heterotetramer composed of 2 epsilon subunits (GlmE) and 2 sigma subunits (GlmS). GlmE exists as a homodimer and GlmS as a monomer. It depends on adenosylcob(III)alamin as a cofactor.

It carries out the reaction (2S,3S)-3-methyl-L-aspartate = L-glutamate. It functions in the pathway amino-acid degradation; L-glutamate degradation via mesaconate pathway; acetate and pyruvate from L-glutamate: step 1/4. Functionally, catalyzes the carbon skeleton rearrangement of L-glutamate to L-threo-3-methylaspartate ((2S,3S)-3-methylaspartate). The polypeptide is Glutamate mutase epsilon subunit (Fusobacterium nucleatum subsp. nucleatum (strain ATCC 25586 / DSM 15643 / BCRC 10681 / CIP 101130 / JCM 8532 / KCTC 2640 / LMG 13131 / VPI 4355)).